We begin with the raw amino-acid sequence, 238 residues long: Large ribosomal subunit protein uL2 (238 aa).

The tract at residues 198–238 is disordered; that stretch reads HPHGGGLHQSVSRPSTVSRNAPPGRKVGHIASRRTGRRGGA. Positions 206-216 are enriched in polar residues; the sequence is QSVSRPSTVSR. The span at 223 to 238 shows a compositional bias: basic residues; it reads KVGHIASRRTGRRGGA.

It belongs to the universal ribosomal protein uL2 family. As to quaternary structure, part of the 50S ribosomal subunit. Forms a bridge to the 30S subunit in the 70S ribosome.

In terms of biological role, one of the primary rRNA binding proteins. Required for association of the 30S and 50S subunits to form the 70S ribosome, for tRNA binding and peptide bond formation. It has been suggested to have peptidyltransferase activity; this is somewhat controversial. Makes several contacts with the 16S rRNA in the 70S ribosome. This chain is Large ribosomal subunit protein uL2, found in Sulfolobus acidocaldarius (strain ATCC 33909 / DSM 639 / JCM 8929 / NBRC 15157 / NCIMB 11770).